The following is a 300-amino-acid chain: Nicotinate-nucleotide pyrophosphorylase [carboxylating] (300 aa).

The interval 5–9 (QLLPK) is important for hexamer formation. Quinolinate contacts are provided by residues arginine 107, 150 to 151 (RK), 172 to 173 (HR), lysine 183, glutamate 213, aspartate 234, 260 to 262 (SGG), and glycine 282.

Belongs to the NadC/ModD family. As to quaternary structure, hexamer formed by 3 homodimers.

It carries out the reaction nicotinate beta-D-ribonucleotide + CO2 + diphosphate = quinolinate + 5-phospho-alpha-D-ribose 1-diphosphate + 2 H(+). Its pathway is cofactor biosynthesis; NAD(+) biosynthesis; nicotinate D-ribonucleotide from quinolinate: step 1/1. In terms of biological role, involved in the catabolism of quinolinic acid (QA). The sequence is that of Nicotinate-nucleotide pyrophosphorylase [carboxylating] (qprt) from Dictyostelium discoideum (Social amoeba).